Here is a 210-residue protein sequence, read N- to C-terminus: dTTP/UTP pyrophosphatase (210 aa).

Catalysis depends on Asp-89, which acts as the Proton acceptor.

The protein belongs to the Maf family. YhdE subfamily. Requires a divalent metal cation as cofactor.

The protein localises to the cytoplasm. The enzyme catalyses dTTP + H2O = dTMP + diphosphate + H(+). The catalysed reaction is UTP + H2O = UMP + diphosphate + H(+). Functionally, nucleoside triphosphate pyrophosphatase that hydrolyzes dTTP and UTP. May have a dual role in cell division arrest and in preventing the incorporation of modified nucleotides into cellular nucleic acids. This Burkholderia lata (strain ATCC 17760 / DSM 23089 / LMG 22485 / NCIMB 9086 / R18194 / 383) protein is dTTP/UTP pyrophosphatase.